A 397-amino-acid polypeptide reads, in one-letter code: Riboflavin biosynthesis protein RibBA (397 aa).

The segment at Met-1–His-199 is DHBP synthase. Residues Arg-26–Glu-27, Asp-31, Arg-138–Thr-142, and Glu-162 contribute to the D-ribulose 5-phosphate site. Mg(2+) is bound at residue Glu-27. A Mg(2+)-binding site is contributed by His-141. The GTP cyclohydrolase II stretch occupies residues His-200–Leu-397. Arg-250 to Glu-254 is a GTP binding site. 3 residues coordinate Zn(2+): Cys-255, Cys-266, and Cys-268. Residues Gln-271, Glu-293 to Arg-295, and Thr-315 contribute to the GTP site. The Proton acceptor; for GTP cyclohydrolase activity role is filled by Asp-327. Arg-329 functions as the Nucleophile; for GTP cyclohydrolase activity in the catalytic mechanism. Residues Thr-350 and Lys-355 each contribute to the GTP site.

This sequence in the N-terminal section; belongs to the DHBP synthase family. The protein in the C-terminal section; belongs to the GTP cyclohydrolase II family. It depends on Mg(2+) as a cofactor. Mn(2+) is required as a cofactor. Zn(2+) serves as cofactor.

The catalysed reaction is D-ribulose 5-phosphate = (2S)-2-hydroxy-3-oxobutyl phosphate + formate + H(+). The enzyme catalyses GTP + 4 H2O = 2,5-diamino-6-hydroxy-4-(5-phosphoribosylamino)-pyrimidine + formate + 2 phosphate + 3 H(+). The protein operates within cofactor biosynthesis; riboflavin biosynthesis; 2-hydroxy-3-oxobutyl phosphate from D-ribulose 5-phosphate: step 1/1. Its pathway is cofactor biosynthesis; riboflavin biosynthesis; 5-amino-6-(D-ribitylamino)uracil from GTP: step 1/4. In terms of biological role, catalyzes the conversion of D-ribulose 5-phosphate to formate and 3,4-dihydroxy-2-butanone 4-phosphate. Functionally, catalyzes the conversion of GTP to 2,5-diamino-6-ribosylamino-4(3H)-pyrimidinone 5'-phosphate (DARP), formate and pyrophosphate. In Bacillus cereus (strain B4264), this protein is Riboflavin biosynthesis protein RibBA.